Reading from the N-terminus, the 141-residue chain is Cystatin (141 aa).

Positions 1-26 (MVHSQLPVVALLRLLCALLLLPSATM) are cleaved as a signal peptide. A Cystatin domain is found at 29–129 (GGLSPRSVTD…CRFQVWSRPW (101 aa)). The short motif at 73–77 (QVVAG) is the Secondary area of contact element. 2 cysteine pairs are disulfide-bonded: Cys-91/Cys-107 and Cys-120/Cys-140.

It belongs to the cystatin family. Expressed at a low level by the venom gland (at protein level).

The protein resides in the secreted. In terms of biological role, inhibits various C1 cysteine proteases including cathepsin L, papain and cathepsin B. This protein has no toxic activity and its function in the venom is unknown. It may play a role as a housekeeping or regulatory protein. In Notechis scutatus scutatus (Mainland tiger snake), this protein is Cystatin.